A 273-amino-acid chain; its full sequence is 5-deoxy-glucuronate isomerase (273 aa).

It belongs to the isomerase IolB family.

The enzyme catalyses 5-deoxy-D-glucuronate = 5-dehydro-2-deoxy-D-gluconate. Its pathway is polyol metabolism; myo-inositol degradation into acetyl-CoA; acetyl-CoA from myo-inositol: step 4/7. Functionally, involved in the isomerization of 5-deoxy-glucuronate (5DG) to 5-dehydro-2-deoxy-D-gluconate (DKG or 2-deoxy-5-keto-D-gluconate). The chain is 5-deoxy-glucuronate isomerase from Listeria monocytogenes serovar 1/2a (strain ATCC BAA-679 / EGD-e).